A 196-amino-acid polypeptide reads, in one-letter code: GTP cyclohydrolase-2 (196 aa).

49–53 is a GTP binding site; sequence RVHSE. Positions 54, 65, and 67 each coordinate Zn(2+). GTP-binding positions include Gln70, 92–94, and Thr114; that span reads EGR. Residue Asp126 is the Proton acceptor of the active site. The Nucleophile role is filled by Arg128. Residues Thr149 and Lys154 each coordinate GTP.

The protein belongs to the GTP cyclohydrolase II family. As to quaternary structure, homodimer. Zn(2+) serves as cofactor.

It carries out the reaction GTP + 4 H2O = 2,5-diamino-6-hydroxy-4-(5-phosphoribosylamino)-pyrimidine + formate + 2 phosphate + 3 H(+). It functions in the pathway cofactor biosynthesis; riboflavin biosynthesis; 5-amino-6-(D-ribitylamino)uracil from GTP: step 1/4. In terms of biological role, catalyzes the conversion of GTP to 2,5-diamino-6-ribosylamino-4(3H)-pyrimidinone 5'-phosphate (DARP), formate and pyrophosphate. The polypeptide is GTP cyclohydrolase-2 (Salmonella choleraesuis (strain SC-B67)).